Here is a 350-residue protein sequence, read N- to C-terminus: Glyoxylate reductase 1 (350 aa).

Threonine 31 is subject to Phosphothreonine. NAD(+) contacts are provided by residues 173-174, 252-254, and aspartate 278; these read RI and TAR. Residue arginine 254 is part of the active site. Residue glutamate 283 is part of the active site. Catalysis depends on histidine 301, which acts as the Proton donor. 301–304 is a binding site for NAD(+); it reads HMGT.

This sequence belongs to the D-isomer specific 2-hydroxyacid dehydrogenase family.

The protein localises to the cytoplasm. The protein resides in the nucleus. Its subcellular location is the mitochondrion. The enzyme catalyses glycolate + NAD(+) = glyoxylate + NADH + H(+). The catalysed reaction is glycolate + NADP(+) = glyoxylate + NADPH + H(+). It carries out the reaction (R)-glycerate + NAD(+) = 3-hydroxypyruvate + NADH + H(+). It catalyses the reaction (R)-glycerate + NADP(+) = 3-hydroxypyruvate + NADPH + H(+). Its function is as follows. Glyoxylate reductase that reversibly reduces glyoxylate to glycolate, or alternatively hydroxypyruvate to D-glycerate, using either NADPH or NADH as a cosubstrate. Does not act as a hydroxyisocaproate dehydrogenase even though it also has minor activity on alpha-ketoisocaproate. In Saccharomyces cerevisiae (strain ATCC 204508 / S288c) (Baker's yeast), this protein is Glyoxylate reductase 1.